Reading from the N-terminus, the 88-residue chain is Putative membrane protein insertion efficiency factor (88 aa).

It belongs to the UPF0161 family.

It is found in the cell membrane. Could be involved in insertion of integral membrane proteins into the membrane. This Exiguobacterium sibiricum (strain DSM 17290 / CCUG 55495 / CIP 109462 / JCM 13490 / 255-15) protein is Putative membrane protein insertion efficiency factor.